Reading from the N-terminus, the 230-residue chain is 7-cyano-7-deazaguanine synthase (230 aa).

An ATP-binding site is contributed by 14–24 (LSGGLDSTTTL). Zn(2+) contacts are provided by Cys-194, Cys-204, Cys-207, and Cys-210.

The protein belongs to the QueC family. Requires Zn(2+) as cofactor.

The catalysed reaction is 7-carboxy-7-deazaguanine + NH4(+) + ATP = 7-cyano-7-deazaguanine + ADP + phosphate + H2O + H(+). It functions in the pathway purine metabolism; 7-cyano-7-deazaguanine biosynthesis. Functionally, catalyzes the ATP-dependent conversion of 7-carboxy-7-deazaguanine (CDG) to 7-cyano-7-deazaguanine (preQ(0)). This Vesicomyosocius okutanii subsp. Calyptogena okutanii (strain HA) protein is 7-cyano-7-deazaguanine synthase.